The following is a 1018-amino-acid chain: Pikachurin (1018 aa).

A signal peptide spans 1 to 23 (MDLIRGVLLRLLLLASSLGPGAA). Fibronectin type-III domains are found at residues 37–145 (PPLD…TLPQ) and 153–248 (APQQ…TARP). Residue asparagine 47 is glycosylated (N-linked (GlcNAc...) asparagine). Residues 228–274 (VNPHGSSPRSQPSSTIRTARPEESGSGRYGPHYATDTEAGEDDDTFE) are disordered. Over residues 231–244 (HGSSPRSQPSSTIR) the composition is skewed to polar residues. Acidic residues predominate over residues 265-274 (EAGEDDDTFE). One can recognise an EGF-like 1 domain in the interval 352 to 390 (FDTSCDETVCSADSFCVSDYTWGGSRCHCNLGKGGESCS). Cystine bridges form between cysteine 356-cysteine 367, cysteine 361-cysteine 378, cysteine 380-cysteine 389, cysteine 543-cysteine 573, cysteine 578-cysteine 589, cysteine 583-cysteine 599, cysteine 601-cysteine 610, cysteine 797-cysteine 808, cysteine 802-cysteine 817, cysteine 819-cysteine 828, and cysteine 988-cysteine 1015. The 179-residue stretch at 395 to 573 (IQYPQFFGHS…ALSGADVGEC (179 aa)) folds into the Laminin G-like 1 domain. EGF-like domains follow at residues 574–611 (SSGICDEASCINGGTCMASKADSYICLCPLGFRGRHCE) and 793–829 (AAHPCVGSPCAHGGSCRPRKEGYECDCPLGFEGLHCQ). One can recognise a Laminin G-like 2 domain in the interval 618-797 (IPQFKESLRS…VNVENAAHPC (180 aa)). The 180-residue stretch at 836 to 1015 (IEIPQFIGRS…AVDGKNINTC (180 aa)) folds into the Laminin G-like 3 domain.

In terms of assembly, interacts with DAG1 alpha-dystroglycan. Interacts with GPR158 and GPR179; transsynaptic interaction is required for synaptic organization of photoreceptor cells. In terms of processing, O-glycosylated; contains chondroitin sulfate and heparan sulfate.

It is found in the secreted. The protein localises to the extracellular space. Its subcellular location is the extracellular matrix. The protein resides in the synaptic cleft. It localises to the presynaptic active zone. Involved in both the retinal photoreceptor ribbon synapse formation and physiological functions of visual perception. Plays a key role in the synaptic organization of photoreceptors by mediating transsynaptic interaction between alpha-dystroglycan and GPR179 on the postsynaptic membrane. Necessary for proper bipolar dendritic tip apposition to the photoreceptor ribbon synapse. Promotes matrix assembly and cell adhesiveness. In Bos taurus (Bovine), this protein is Pikachurin (EGFLAM).